A 474-amino-acid chain; its full sequence is tRNA-2-methylthio-N(6)-dimethylallyladenosine synthase (474 aa).

The 118-residue stretch at 3 to 120 (KKLHIKTWGC…LPEMINSVRG (118 aa)) folds into the MTTase N-terminal domain. Positions 12, 49, 83, 157, 161, and 164 each coordinate [4Fe-4S] cluster. Residues 143-375 (RAEGPTAFVS…QERINQQAMA (233 aa)) form the Radical SAM core domain. The region spanning 378-441 (RRMLGTTQRI…PNSLRGKVVR (64 aa)) is the TRAM domain.

Belongs to the methylthiotransferase family. MiaB subfamily. Monomer. [4Fe-4S] cluster serves as cofactor.

It localises to the cytoplasm. It catalyses the reaction N(6)-dimethylallyladenosine(37) in tRNA + (sulfur carrier)-SH + AH2 + 2 S-adenosyl-L-methionine = 2-methylsulfanyl-N(6)-dimethylallyladenosine(37) in tRNA + (sulfur carrier)-H + 5'-deoxyadenosine + L-methionine + A + S-adenosyl-L-homocysteine + 2 H(+). Catalyzes the methylthiolation of N6-(dimethylallyl)adenosine (i(6)A), leading to the formation of 2-methylthio-N6-(dimethylallyl)adenosine (ms(2)i(6)A) at position 37 in tRNAs that read codons beginning with uridine. This chain is tRNA-2-methylthio-N(6)-dimethylallyladenosine synthase, found in Salmonella paratyphi A (strain ATCC 9150 / SARB42).